The chain runs to 402 residues: Serine/threonine-protein phosphatase 4 regulatory subunit 2 (402 aa).

The segment at 258 to 402 is disordered; sequence NEDQDDENTG…FSKRNKASES (145 aa). Residues 266 to 277 show a composition bias toward polar residues; it reads TGFSNQVINDNN. Acidic residues predominate over residues 278-319; the sequence is DSQEDDDEDSDYIEEDEGDEDEDDDDDEEEEEEEDGDEDEDE. Basic and acidic residues predominate over residues 320–337; the sequence is DKHFDIKVEEEAVKEDAN. Low complexity predominate over residues 345-358; that stretch reads NVSNNSDDSSLQND.

It belongs to the PPP4R2 family. In terms of assembly, regulatory subunit (R2) of the histone H2A phosphatase complex (HTP-C) consisting of PPH3, PSY2 and PSY4.

It is found in the nucleus. Regulatory subunit of the histone H2A phosphatase complex, which dephosphorylates H2AS128ph (gamma-H2A) that has been displaced from sites of DNA lesions in the double-stranded DNA break repair process. Dephosphorylation is necessary for efficient recovery from the DNA damage checkpoint. The chain is Serine/threonine-protein phosphatase 4 regulatory subunit 2 (PSY4) from Candida glabrata (strain ATCC 2001 / BCRC 20586 / JCM 3761 / NBRC 0622 / NRRL Y-65 / CBS 138) (Yeast).